The sequence spans 204 residues: Terpene cyclase trt1 (204 aa).

5 helical membrane passes run 44–64, 67–87, 103–122, 132–154, and 169–189; these read FMSI…YPIA, HWAG…FIVA, FARL…HLAL, FFWS…LVCR, and WFYI…FFYF.

The protein belongs to the paxB family.

It localises to the membrane. It participates in secondary metabolite biosynthesis; terpenoid biosynthesis. Functionally, terpene cyclase; part of the gene cluster that mediates the biosynthesis of terretonin, a fungal meroterpenoid that acts as a mycotoxin. The first step of the pathway is the synthesis of 3,5-dimethylorsellinic acid (DMOA) by the polyketide synthase trt4. DMOA is then prenylated into farnesyl-DMOA by the polyprenyl transferase trt2. Methylation by the methyltransferase trt5 then leads to farnesyl-DMOA methyl ester which is further subject to epoxidation by the FAD-dependent monooxygenase trt8 to yield epoxyfarnesyl-DMOA methyl ester. Cyclization of epoxyfarnesyl-DMOA methyl ester by the terpene cyclase trt1 leads to a tetracycle intermediate which is in turn converted to preterretonin. Dehydrogenase trt9 comes next to transform preterretonin to preterrenoid. The FAD-dependent monooxygenase trt3 is then required for the C-hydroxylation at C16 of preterrenoid to yield terrenoid. The cytochrome P450 trt6 catalyzes three successive oxidations to transform terrenoid into an unstable intermediate, which then undergoes the D-ring expansion and unusual rearrangement of the methoxy group to afford the core skeleton of terretonin. Trt14 catalyzes the D-ring expansion of terretonin involving intramolecular methoxy rearrangement as well as the hydrolysis of the expanded D-ring and the methyl ester moiety. Finally, the nonheme iron-dependent dioxygenase trt7 accomplishes the last two oxidation reactions steps to complete the biosynthesis of terretonin. Terretonin C is produced via spontaneous decarboxylation of the terretonin precursor. Another shunt product of the terretonin biosynthesis is dihydrofarnesyl-DMOA, derived from epoxyfarnesyl-DMOA through hydrolysis of the epoxide. In Aspergillus terreus (strain NIH 2624 / FGSC A1156), this protein is Terpene cyclase trt1.